Reading from the N-terminus, the 312-residue chain is Olfactory receptor 6B2 (312 aa).

Residues Met-1–Tyr-25 lie on the Extracellular side of the membrane. Residue Asn-5 is glycosylated (N-linked (GlcNAc...) asparagine). Residues Leu-26–Ile-46 traverse the membrane as a helical segment. Over Leu-47–Ser-54 the chain is Cytoplasmic. A helical transmembrane segment spans residues Leu-55–Ser-75. The Extracellular portion of the chain corresponds to Asp-76–Thr-99. The cysteines at positions 97 and 189 are disulfide-linked. The helical transmembrane segment at Gln-100–Tyr-120 threads the bilayer. Residues Asp-121–Gly-139 lie on the Cytoplasmic side of the membrane. The chain crosses the membrane as a helical span at residues Leu-140–Val-160. Residues Cys-161–Glu-196 lie on the Extracellular side of the membrane. A helical membrane pass occupies residues Leu-197 to Ser-217. At Tyr-218–Ala-237 the chain is on the cytoplasmic side. The helical transmembrane segment at Phe-238–Met-258 threads the bilayer. Over Tyr-259–Asn-271 the chain is Extracellular. The chain crosses the membrane as a helical span at residues Lys-272–Leu-292. The Cytoplasmic segment spans residues Arg-293 to His-312.

Belongs to the G-protein coupled receptor 1 family.

It localises to the cell membrane. Odorant receptor. This is Olfactory receptor 6B2 (OR6B2) from Homo sapiens (Human).